The chain runs to 1423 residues: DNA-directed RNA polymerase, mitochondrial (1423 aa).

Residues 1–73 (MLPRTASATR…RATVGFERHL (73 aa)) constitute a mitochondrion transit peptide. Residues 266–303 (NMPDNVDPDTFAQQQQQQQQQQQQQQEQQQQQDTSIDQ) form a disordered region. The segment covering 278–297 (QQQQQQQQQQQQQQEQQQQQ) has biased composition (low complexity). Catalysis depends on residues Asp901 and Lys970. Residues 1055–1064 (EFERSERSPH) show a composition bias toward basic and acidic residues. The tract at residues 1055-1087 (EFERSERSPHGDGTASGENITLAGNPRKSSAHK) is disordered. The active site involves Asp1180. The tract at residues 1316 to 1342 (VRRGREMDEEGEVDGSEEAVEHEDGMH) is disordered. The segment covering 1322–1336 (MDEEGEVDGSEEAVE) has biased composition (acidic residues).

Belongs to the phage and mitochondrial RNA polymerase family.

The protein localises to the mitochondrion. It catalyses the reaction RNA(n) + a ribonucleoside 5'-triphosphate = RNA(n+1) + diphosphate. DNA-dependent RNA polymerase catalyzes the transcription of DNA into RNA using the four ribonucleoside triphosphates as substrates. The chain is DNA-directed RNA polymerase, mitochondrial (cyt-5) from Neurospora crassa (strain ATCC 24698 / 74-OR23-1A / CBS 708.71 / DSM 1257 / FGSC 987).